The sequence spans 226 residues: Eukaryotic translation initiation factor 3 subunit K (226 aa).

Residues 44–202 enclose the PCI domain; that stretch reads YSLEVNLCLL…IVLPQNEFNH (159 aa).

Belongs to the eIF-3 subunit K family. Component of the eukaryotic translation initiation factor 3 (eIF-3) complex.

Its subcellular location is the cytoplasm. Component of the eukaryotic translation initiation factor 3 (eIF-3) complex, which is involved in protein synthesis of a specialized repertoire of mRNAs and, together with other initiation factors, stimulates binding of mRNA and methionyl-tRNAi to the 40S ribosome. The eIF-3 complex specifically targets and initiates translation of a subset of mRNAs involved in cell proliferation. This is Eukaryotic translation initiation factor 3 subunit K (TIF3K1) from Arabidopsis thaliana (Mouse-ear cress).